The following is a 33-amino-acid chain: Brevinin-2Rh (33 aa).

Cysteine 27 and cysteine 33 form a disulfide bridge.

Expressed by the skin glands.

It localises to the secreted. Its function is as follows. Antimicrobial peptide. In Pelophylax ridibundus (Marsh frog), this protein is Brevinin-2Rh.